An 862-amino-acid polypeptide reads, in one-letter code: Ubiquitin carboxyl-terminal hydrolase 13 (862 aa).

The UBP-type; degenerate zinc finger occupies 182-290 (QASKHAKSLV…KHLAHFGIDM (109 aa)). Zn(2+)-binding residues include C206, C209, C226, and H239. In terms of domain architecture, USP spans 331–860 (TGMKNLGNSC…LGYIYFYHRI (530 aa)). C340 functions as the Nucleophile in the catalytic mechanism. 2 consecutive UBA domains span residues 647–688 (DIDE…IIAH) and 722–762 (QPPE…IFSH). The Proton acceptor role is filled by H822.

Belongs to the peptidase C19 family.

It carries out the reaction Thiol-dependent hydrolysis of ester, thioester, amide, peptide and isopeptide bonds formed by the C-terminal Gly of ubiquitin (a 76-residue protein attached to proteins as an intracellular targeting signal).. With respect to regulation, specifically inhibited by spautin-1 (specific and potent autophagy inhibitor-1), a derivative of MBCQ that binds to USP13 and inhibits deubiquitinase activity. Functionally, deubiquitinase that mediates deubiquitination of target proteins and is involved in various processes such as autophagy and endoplasmic reticulum-associated degradation (ERAD). The chain is Ubiquitin carboxyl-terminal hydrolase 13 (USP13) from Gallus gallus (Chicken).